A 403-amino-acid polypeptide reads, in one-letter code: Argininosuccinate synthase (403 aa).

10 to 18 (AYSGGLDTS) lines the ATP pocket. 2 residues coordinate L-citrulline: Tyr88 and Ser93. Residue Gly118 coordinates ATP. L-aspartate is bound by residues Thr120, Asn124, and Asp125. Asn124 contacts L-citrulline. L-citrulline-binding residues include Arg128, Ser177, Ser186, Glu263, and Tyr275.

The protein belongs to the argininosuccinate synthase family. Type 1 subfamily. In terms of assembly, homotetramer.

It localises to the cytoplasm. It carries out the reaction L-citrulline + L-aspartate + ATP = 2-(N(omega)-L-arginino)succinate + AMP + diphosphate + H(+). It functions in the pathway amino-acid biosynthesis; L-arginine biosynthesis; L-arginine from L-ornithine and carbamoyl phosphate: step 2/3. In Clostridium perfringens (strain ATCC 13124 / DSM 756 / JCM 1290 / NCIMB 6125 / NCTC 8237 / Type A), this protein is Argininosuccinate synthase.